We begin with the raw amino-acid sequence, 127 residues long: UPF0325 protein ASA_3165 (127 aa).

The protein belongs to the UPF0325 family.

This is UPF0325 protein ASA_3165 from Aeromonas salmonicida (strain A449).